Here is a 759-residue protein sequence, read N- to C-terminus: Xaa-Pro dipeptidyl-peptidase (759 aa).

Residues S347, D467, and H497 each act as charge relay system in the active site.

This sequence belongs to the peptidase S15 family. As to quaternary structure, homodimer.

It localises to the secreted. The catalysed reaction is Hydrolyzes Xaa-Pro-|- bonds to release unblocked, N-terminal dipeptides from substrates including Ala-Pro-|-p-nitroanilide and (sequentially) Tyr-Pro-|-Phe-Pro-|-Gly-Pro-|-Ile.. Functionally, removes N-terminal dipeptides sequentially from polypeptides having unsubstituted N-termini provided that the penultimate residue is proline. This is Xaa-Pro dipeptidyl-peptidase (pepX) from Streptococcus gordonii.